The following is a 260-amino-acid chain: MVLIRVLANLLVLQLSYAQKSSELVIGGDECNINEHPFPVALHTARSKRFYCAGTLINQEWVLTAARCDRKNIRIILGVHSKNVPNEDQQIRVPKEKFFCLSSKTYTRWDKDIMLIRLKKPVNDSTHIVPLSLPSSPPSVGSVCRIMGWGTITTTKVTYPDVPHCANINMFDYSVCRKVYRKLPEKSRTLCAGILQGGIDSCKVDNGGPLICNGQIQGIVSWGGHPCAQPHKPALYTNVFDYTDWIQSIIAGNITATCPP.

The first 18 residues, 1 to 18 (MVLIRVLANLLVLQLSYA), serve as a signal peptide directing secretion. Residues 19–24 (QKSSEL) constitute a propeptide that is removed on maturation. In terms of domain architecture, Peptidase S1 spans 25 to 251 (VIGGDECNIN…YTDWIQSIIA (227 aa)). Intrachain disulfides connect Cys-31/Cys-165, Cys-52/Cys-68, Cys-100/Cys-258, Cys-144/Cys-212, Cys-176/Cys-191, and Cys-202/Cys-227. Residue Asn-123 is glycosylated (N-linked (GlcNAc...) asparagine). Asn-253 carries an N-linked (GlcNAc...) asparagine glycan.

Belongs to the peptidase S1 family. Snake venom subfamily. As to expression, expressed by the venom gland.

The protein localises to the secreted. Functionally, snake venom serine protease homolog that may act in the hemostasis system of the prey. This Macrovipera lebetinus (Levantine viper) protein is Snake venom serine protease homolog 2.